The following is a 209-amino-acid chain: Uracil phosphoribosyltransferase (209 aa).

Residues Arg79, Arg104, and 131–139 (DPMLATGGS) contribute to the 5-phospho-alpha-D-ribose 1-diphosphate site. Residues Ile194 and 199–201 (GDA) contribute to the uracil site. Asp200 contacts 5-phospho-alpha-D-ribose 1-diphosphate.

This sequence belongs to the UPRTase family. Mg(2+) serves as cofactor.

It catalyses the reaction UMP + diphosphate = 5-phospho-alpha-D-ribose 1-diphosphate + uracil. The protein operates within pyrimidine metabolism; UMP biosynthesis via salvage pathway; UMP from uracil: step 1/1. With respect to regulation, allosterically activated by GTP. Functionally, catalyzes the conversion of uracil and 5-phospho-alpha-D-ribose 1-diphosphate (PRPP) to UMP and diphosphate. This chain is Uracil phosphoribosyltransferase, found in Exiguobacterium sibiricum (strain DSM 17290 / CCUG 55495 / CIP 109462 / JCM 13490 / 255-15).